The sequence spans 379 residues: Homoserine O-succinyltransferase (379 aa).

The AB hydrolase-1 domain maps to 51–360 (NAVLICHALS…DSPYGHDAFL (310 aa)). Ser-157 acts as the Nucleophile in catalysis. Substrate is bound at residue Arg-227. Active-site residues include Asp-323 and His-356. Asp-357 lines the substrate pocket.

It belongs to the AB hydrolase superfamily. MetX family. In terms of assembly, homodimer.

It localises to the cytoplasm. The enzyme catalyses L-homoserine + succinyl-CoA = O-succinyl-L-homoserine + CoA. Its pathway is amino-acid biosynthesis; L-methionine biosynthesis via de novo pathway; O-succinyl-L-homoserine from L-homoserine: step 1/1. Its function is as follows. Transfers a succinyl group from succinyl-CoA to L-homoserine, forming succinyl-L-homoserine. The polypeptide is Homoserine O-succinyltransferase (Pseudomonas entomophila (strain L48)).